We begin with the raw amino-acid sequence, 562 residues long: Potassium-transporting ATPase potassium-binding subunit (562 aa).

12 helical membrane-spanning segments follow: residues 6–26 (FLLI…LGSF), 62–82 (YALA…ALLM), 132–152 (GLAV…FALI), 170–190 (VFRI…LFFV), 253–273 (FVQM…FGQV), 283–303 (LIWA…YAEL), 327–347 (FGIL…CGAV), 356–376 (ALGG…FGGV), 379–399 (GLYG…LMIG), 416–436 (MTAL…ALAI), 483–503 (LLLA…VLAI), and 526–546 (LFIG…FVPA).

Belongs to the KdpA family. In terms of assembly, the system is composed of three essential subunits: KdpA, KdpB and KdpC.

The protein resides in the cell inner membrane. Part of the high-affinity ATP-driven potassium transport (or Kdp) system, which catalyzes the hydrolysis of ATP coupled with the electrogenic transport of potassium into the cytoplasm. This subunit binds the periplasmic potassium ions and delivers the ions to the membrane domain of KdpB through an intramembrane tunnel. The chain is Potassium-transporting ATPase potassium-binding subunit from Serratia proteamaculans (strain 568).